A 614-amino-acid chain; its full sequence is Sodium- and chloride-dependent betaine transporter (614 aa).

Residues 1 to 44 (MDGKVAVQECGPPAVSWVPEEGEKLDQEDEDQVKDRGQWTNKME) lie on the Cytoplasmic side of the membrane. The next 3 helical transmembrane spans lie at 45–65 (FVLSVAGEIIGLGNVWRFPYL), 73–92 (AFFIPYFIFFFVCGIPVFFL), and 117–137 (GIGLASVVIESYLNVYYIIIL). The Extracellular portion of the chain corresponds to 138–210 (AWALFYLFSS…SGIHDLGSLR (73 aa)). A disulfide bridge connects residues Cys157 and Cys166. N-linked (GlcNAc...) asparagine glycosylation is found at Asn171 and Asn183. A run of 9 helical transmembrane segments spans residues 211–229 (WELALCLLLAWVICYFCIW), 238–255 (VVYFTATFPYLMLVILLI), 291–308 (IFFSFAICQGCLTALGSY), 320–341 (IALCFLNSATSFVAGFVVFSIL), 374–393 (MPLSQLWSCLFFIMLIFLGL), 423–441 (LLILTIAVMCYLIGLFLVT), 458–478 (GICLLFLSLFEVVCISWVYGA), 499–518 (ISWLFLTPGLCLATFLFSLS), and 538–556 (IGWFLALSSMVCVPLFVVI). Residues 557–614 (TLLKTRGPFRKRLRQLITPDSSLPQPKQHPCLDGSAGRNFGPSPTREGLIAGEKETHL) are Cytoplasmic-facing. The tract at residues 576–614 (DSSLPQPKQHPCLDGSAGRNFGPSPTREGLIAGEKETHL) is disordered.

It belongs to the sodium:neurotransmitter symporter (SNF) (TC 2.A.22) family. SLC6A12 subfamily. In terms of assembly, interacts with LIN7C. In terms of tissue distribution, expressed in kidney, liver, heart, skeletal muscle, placenta, and a widespread distribution in the brain.

The protein localises to the basolateral cell membrane. Its subcellular location is the cell membrane. The enzyme catalyses 4-aminobutanoate(out) + chloride(out) + 3 Na(+)(out) = 4-aminobutanoate(in) + chloride(in) + 3 Na(+)(in). The catalysed reaction is glycine betaine(out) + 2 chloride(out) + 3 Na(+)(out) = glycine betaine(in) + 2 chloride(in) + 3 Na(+)(in). In terms of biological role, transporter that mediates cellular uptake of betaine and GABA in a sodium- and chloride-dependent process. May have a role in regulation of GABAergic transmission in the brain through the reuptake of GABA into presynaptic terminals, as well as in osmotic regulation. Probably also involved in renal and hepatic osmotic regulation. The sequence is that of Sodium- and chloride-dependent betaine transporter from Homo sapiens (Human).